We begin with the raw amino-acid sequence, 270 residues long: MTTTHPSGFAPAASPLAPTMIHTPDGAISAGITSIPSQGDDMPAYYARPKASDGALPVVIVVQEIFGVHEHIRDICRRLALEGYLAIAPELYFREGDPNDFADIPTLLSGLVAKVPDSQVLADLDHVASWASRNGGDAHRLMITGFCWGGRITWLYAAHNPQLKAAVAWYGKLVGDTSLNSPKHPVDIATDLNAPVLGLYSGQDTSIPQESVETMRQALRAANAKAEIVVYPDAGHAFNADYRPGYHEASAKDGWQRMLEWFAQYGGKKG.

Residues Cys-147, Asp-204, and His-236 contribute to the active site.

It belongs to the dienelactone hydrolase family.

The enzyme catalyses 2-(5-oxo-2,5-dihydrofuran-2-ylidene)acetate + H2O = 4-oxohex-2-enedioate + H(+). The chain is Putative carboxymethylenebutenolidase (ysgA) from Salmonella typhi.